Reading from the N-terminus, the 170-residue chain is Adenine phosphoribosyltransferase (170 aa).

Belongs to the purine/pyrimidine phosphoribosyltransferase family. In terms of assembly, homodimer.

The protein resides in the cytoplasm. It catalyses the reaction AMP + diphosphate = 5-phospho-alpha-D-ribose 1-diphosphate + adenine. It functions in the pathway purine metabolism; AMP biosynthesis via salvage pathway; AMP from adenine: step 1/1. In terms of biological role, catalyzes a salvage reaction resulting in the formation of AMP, that is energically less costly than de novo synthesis. This chain is Adenine phosphoribosyltransferase, found in Streptococcus sanguinis (strain SK36).